The following is a 317-amino-acid chain: Melanocyte-stimulating hormone receptor (317 aa).

The Extracellular portion of the chain corresponds to 1 to 37 (MPVQGSLRSLVGAVNSTPTASPHLRPATNQTEPQCLE). N-linked (GlcNAc...) asparagine glycosylation is present at Asn-29. The helical transmembrane segment at 38–63 (VSVPVGLFLCLGLVSLVENTLVVAVI) threads the bilayer. The Cytoplasmic segment spans residues 64 to 72 (AKNRNLHSP). Residues 73-93 (MYCFICCLALSDLLVSVSNVL) traverse the membrane as a helical segment. Residues 94–118 (KTAVLLLLEAGALAAQATVVQQLGN) lie on the Extracellular side of the membrane. The chain crosses the membrane as a helical span at residues 119-140 (VINMLICSSMVSSLCFLGAIAM). At 141-163 (DRYISIFYALRYHSIVTLARARR) the chain is on the cytoplasmic side. A helical membrane pass occupies residues 164–183 (AIAAVWVASILSSILFFTYY). The Extracellular portion of the chain corresponds to 184 to 191 (DRTAALLC). The helical transmembrane segment at 192 to 211 (LVVFFLAMLVLMAVLYVHML) threads the bilayer. Residues 212–240 (TQACQHAQGIARLHKRQHPVQQGWGLKGA) are Cytoplasmic-facing. Residues 241–266 (ATLAVLLGVFFLCWGPLFLHLTLIAV) form a helical membrane-spanning segment. At 267-279 (CPQHPTCNCIVKN) the chain is on the extracellular side. Residues 280–300 (FKLFLALIICNAIVDPLIYAF) form a helical membrane-spanning segment. At 301–317 (RSQELRKTLKEVLLFSW) the chain is on the cytoplasmic side.

This sequence belongs to the G-protein coupled receptor 1 family. In terms of assembly, interacts with MGRN1, but does not undergo MGRN1-mediated ubiquitination; this interaction competes with GNAS-binding and thus inhibits agonist-induced cAMP production. Interacts with OPN3; the interaction results in a decrease in MC1R-mediated cAMP signaling and ultimately a decrease in melanin production in melanocytes.

The protein resides in the cell membrane. Functionally, receptor for MSH (alpha, beta and gamma) and ACTH. The activity of this receptor is mediated by G proteins which activate adenylate cyclase. Mediates melanogenesis, the production of eumelanin (black/brown) and phaeomelanin (red/yellow), via regulation of cAMP signaling in melanocytes. In Varecia rubra (Red ruffed lemur), this protein is Melanocyte-stimulating hormone receptor (MC1R).